The primary structure comprises 81 residues: Omega-conotoxin-like Vc6.4 (81 aa).

Residues 1 to 22 (MKLTCVMIVAVLFLTANTFVTA) form the signal peptide. The propeptide occupies 23–51 (VPHSSNVLENLYLKARHEMENPEASKLNT). Disulfide bonds link Cys-55–Cys-72, Cys-62–Cys-76, and Cys-71–Cys-80.

The protein belongs to the conotoxin O1 superfamily. As to expression, expressed by the venom duct.

The protein resides in the secreted. In terms of biological role, omega-conotoxins act at presynaptic membranes, they bind and block voltage-gated calcium channels. Act on high voltage-activated (HVA) calcium currents in molluscan neurons. This is Omega-conotoxin-like Vc6.4 from Conus victoriae (Queen Victoria cone).